Consider the following 126-residue polypeptide: Large ribosomal subunit protein bL17 (126 aa).

The protein belongs to the bacterial ribosomal protein bL17 family. As to quaternary structure, part of the 50S ribosomal subunit. Contacts protein L32.

In Lactococcus lactis subsp. lactis (strain IL1403) (Streptococcus lactis), this protein is Large ribosomal subunit protein bL17.